Here is a 115-residue protein sequence, read N- to C-terminus: Large ribosomal subunit protein eL36 (115 aa).

It belongs to the eukaryotic ribosomal protein eL36 family. As to quaternary structure, component of the large ribosomal subunit.

It is found in the cytoplasm. The protein localises to the cytosol. Its function is as follows. Component of the large ribosomal subunit. This chain is Large ribosomal subunit protein eL36 (RpL36), found in Drosophila melanogaster (Fruit fly).